A 313-amino-acid polypeptide reads, in one-letter code: 4-hydroxy-3-methylbut-2-enyl diphosphate reductase (313 aa).

Residue Cys-13 participates in [4Fe-4S] cluster binding. His-41 and His-75 together coordinate (2E)-4-hydroxy-3-methylbut-2-enyl diphosphate. Dimethylallyl diphosphate is bound by residues His-41 and His-75. Residues His-41 and His-75 each contribute to the isopentenyl diphosphate site. Cys-97 lines the [4Fe-4S] cluster pocket. Residue His-125 participates in (2E)-4-hydroxy-3-methylbut-2-enyl diphosphate binding. Dimethylallyl diphosphate is bound at residue His-125. Residue His-125 participates in isopentenyl diphosphate binding. Catalysis depends on Glu-127, which acts as the Proton donor. Thr-168 is a (2E)-4-hydroxy-3-methylbut-2-enyl diphosphate binding site. Cys-218 serves as a coordination point for [4Fe-4S] cluster. Positions 246, 247, 248, and 295 each coordinate (2E)-4-hydroxy-3-methylbut-2-enyl diphosphate. Dimethylallyl diphosphate is bound by residues Ser-246, Ser-247, Asn-248, and Ser-295. Residues Ser-246, Ser-247, Asn-248, and Ser-295 each coordinate isopentenyl diphosphate.

Belongs to the IspH family. The cofactor is [4Fe-4S] cluster.

It carries out the reaction isopentenyl diphosphate + 2 oxidized [2Fe-2S]-[ferredoxin] + H2O = (2E)-4-hydroxy-3-methylbut-2-enyl diphosphate + 2 reduced [2Fe-2S]-[ferredoxin] + 2 H(+). The catalysed reaction is dimethylallyl diphosphate + 2 oxidized [2Fe-2S]-[ferredoxin] + H2O = (2E)-4-hydroxy-3-methylbut-2-enyl diphosphate + 2 reduced [2Fe-2S]-[ferredoxin] + 2 H(+). The protein operates within isoprenoid biosynthesis; dimethylallyl diphosphate biosynthesis; dimethylallyl diphosphate from (2E)-4-hydroxy-3-methylbutenyl diphosphate: step 1/1. It participates in isoprenoid biosynthesis; isopentenyl diphosphate biosynthesis via DXP pathway; isopentenyl diphosphate from 1-deoxy-D-xylulose 5-phosphate: step 6/6. Functionally, catalyzes the conversion of 1-hydroxy-2-methyl-2-(E)-butenyl 4-diphosphate (HMBPP) into a mixture of isopentenyl diphosphate (IPP) and dimethylallyl diphosphate (DMAPP). Acts in the terminal step of the DOXP/MEP pathway for isoprenoid precursor biosynthesis. The polypeptide is 4-hydroxy-3-methylbut-2-enyl diphosphate reductase (Chlorobium phaeovibrioides (strain DSM 265 / 1930) (Prosthecochloris vibrioformis (strain DSM 265))).